Consider the following 321-residue polypeptide: Translation initiation factor eIF2B subunit alpha (321 aa).

This sequence belongs to the eIF-2B alpha/beta/delta subunits family. Component of the translation initiation factor 2B (eIF2B) complex which is a heterodecamer of two sets of five different subunits: alpha, beta, gamma, delta and epsilon. Subunits alpha, beta and delta comprise a regulatory subcomplex and subunits epsilon and gamma comprise a catalytic subcomplex. Within the complex, the hexameric regulatory complex resides at the center, with the two heterodimeric catalytic subcomplexes bound on opposite sides.

It localises to the cytoplasm. It is found in the cytosol. Its function is as follows. Acts as a component of the translation initiation factor 2B (eIF2B) complex, which catalyzes the exchange of GDP for GTP on eukaryotic initiation factor 2 (eIF2) gamma subunit. Its guanine nucleotide exchange factor activity is repressed when bound to eIF2 complex phosphorylated on the alpha subunit, thereby limiting the amount of methionyl-initiator methionine tRNA available to the ribosome and consequently global translation is repressed. The polypeptide is Translation initiation factor eIF2B subunit alpha (eif2b1) (Dictyostelium discoideum (Social amoeba)).